Reading from the N-terminus, the 1114-residue chain is Putative surface protein SAV2496/SAV2497 (1114 aa).

A signal peptide spans 1–50 (MRDKKGPVNKRVDFLSNKLNKYSIRKFTVGTASILIGSLMYLGTQQEAEA). 3 disordered regions span residues 76–116 (TNKD…EDTP), 440–473 (KFNP…NPLT), and 496–1088 (EYGP…TGLE). Basic and acidic residues-rich tracts occupy residues 96–116 (DTIE…EDTP), 451–461 (KVTREGQKGEK), 505–523 (GHRD…EEVP), 554–570 (SIVE…RKFN), and 579–589 (KVTREGQKGEK). Residues 419–501 (SAKNNNRIRK…NELTEYGPET (83 aa)) enclose the G5 1 domain. The G5 2 domain occupies 547–628 (YGPVKGDSIV…NELTEYGPET (82 aa)). Positions 590–604 (TTTPTLKNPLTGEII) are enriched in low complexity. Basic and acidic residues-rich tracts occupy residues 605-618 (SKGE…KDPI), 632-650 (GHRD…EEVP), 681-697 (SIVE…RKFN), 706-716 (KVTREGQKGEK), 733-746 (SKGE…KDPI), 760-778 (GHRD…EEVP), 809-825 (SIVE…RKFN), 834-844 (KVTREGQKGEK), 861-874 (SKGE…KDPV), 918-929 (KVIEEPVDDVIK), and 946-965 (FETK…RVKQ). In terms of domain architecture, G5 3 spans 674–756 (YGPVKGDSIV…NELTEYGPET (83 aa)). A G5 4 domain is found at 802–884 (YGPVKGDSIV…NELTEFGGEK (83 aa)). One can recognise a G5 5 domain in the interval 930–1012 (HGPKTGTPET…DKIVEFGGEK (83 aa)). Positions 968-982 (QPGSKTITTPITVNP) are enriched in polar residues. Residues 996 to 1026 (EITKQPVDKIVEFGGEKPKDPKGPENPEKPS) show a composition bias toward basic and acidic residues. The LPXTG sorting signal signature appears at 1082 to 1086 (LPKTG). T1085 carries the post-translational modification Pentaglycyl murein peptidoglycan amidated threonine. Residues 1086 to 1114 (GLESTQKGLIFSSIIGIAGLMLLARRRKN) constitute a propeptide, removed by sortase.

It localises to the secreted. It is found in the cell wall. The protein is Putative surface protein SAV2496/SAV2497 of Staphylococcus aureus (strain Mu50 / ATCC 700699).